A 411-amino-acid polypeptide reads, in one-letter code: Cladofulvin cluster transcriptional coactivator claA (411 aa).

A compositionally biased stretch (polar residues) spans 1–27 (MSDSLAGNGMRQNLNRSSTSSNHTGHA). The tract at residues 1–32 (MSDSLAGNGMRQNLNRSSTSSNHTGHAQNGRA) is disordered. The HTH iclR-type domain occupies 47–117 (LACQVQSLAC…DPGHIAHTAL (71 aa)). Positions 77 to 96 (LHDVAELANVPASQLSRVVR) form a DNA-binding region, H-T-H motif.

It is found in the nucleus. Functionally, transcriptional coactivator; part of the gene cluster that mediates the biosynthesis of cladofulvin, a conidial pigment not required for virulence but that plays a role in fitness and resistance to environmental stresses including UV light and low-temperature stress. With claE, coregulates the production of cladofulvin. This Passalora fulva (Tomato leaf mold) protein is Cladofulvin cluster transcriptional coactivator claA.